Here is a 634-residue protein sequence, read N- to C-terminus: DNA-directed RNA polymerase subunit gamma (634 aa).

Residues Cys-74, Cys-76, Cys-89, and Cys-92 each coordinate Zn(2+). Positions 471, 473, and 475 each coordinate Mg(2+).

This sequence belongs to the RNA polymerase beta' chain family. RpoC1 subfamily. In cyanobacteria the RNAP catalytic core is composed of 2 alpha, 1 beta, 1 beta', 1 gamma and 1 omega subunit. When a sigma factor is associated with the core the holoenzyme is formed, which can initiate transcription. The cofactor is Mg(2+). Requires Zn(2+) as cofactor.

The enzyme catalyses RNA(n) + a ribonucleoside 5'-triphosphate = RNA(n+1) + diphosphate. In terms of biological role, DNA-dependent RNA polymerase catalyzes the transcription of DNA into RNA using the four ribonucleoside triphosphates as substrates. This chain is DNA-directed RNA polymerase subunit gamma, found in Synechococcus sp. (strain WH7803).